Consider the following 118-residue polypeptide: Large ribosomal subunit protein eL18 (118 aa).

Belongs to the eukaryotic ribosomal protein eL18 family.

This Nanoarchaeum equitans (strain Kin4-M) protein is Large ribosomal subunit protein eL18.